The primary structure comprises 347 residues: Quinolinate synthase (347 aa).

Residues H47 and S68 each contribute to the iminosuccinate site. C113 contacts [4Fe-4S] cluster. Residues 139–141 (YAN) and S156 each bind iminosuccinate. Residue C200 coordinates [4Fe-4S] cluster. Iminosuccinate contacts are provided by residues 226–228 (HPE) and T243. C297 is a binding site for [4Fe-4S] cluster.

This sequence belongs to the quinolinate synthase family. Type 1 subfamily. [4Fe-4S] cluster serves as cofactor.

It localises to the cytoplasm. The catalysed reaction is iminosuccinate + dihydroxyacetone phosphate = quinolinate + phosphate + 2 H2O + H(+). The protein operates within cofactor biosynthesis; NAD(+) biosynthesis; quinolinate from iminoaspartate: step 1/1. Its function is as follows. Catalyzes the condensation of iminoaspartate with dihydroxyacetone phosphate to form quinolinate. This is Quinolinate synthase from Shigella flexneri serotype 5b (strain 8401).